The chain runs to 754 residues: Condensin complex subunit 2 (754 aa).

Positions 104–149 (LAQRKTNGASNGDDSNGGNGEGLGGDSDEANIEIDPLTGMPISNDP) are disordered. Positions 118–128 (SNGGNGEGLGG) are enriched in gly residues. Ser-245 carries the post-translational modification Phosphoserine. The interval 359 to 379 (CYPDENHDNTSHDEQDDDNVN) is disordered. Residues 362 to 371 (DENHDNTSHD) show a composition bias toward basic and acidic residues. The residue at position 548 (Ser-548) is a Phosphoserine. A disordered region spans residues 665 to 688 (HDSRKNREQSSNDSETHTEDESTK).

Belongs to the CND2 (condensin subunit 2) family. As to quaternary structure, component of the condensin complex, which contains the SMC2 and SMC4 heterodimer, and three non SMC subunits that probably regulate the complex: BRN1, YCS4 and YCG1/YCS5.

It is found in the nucleus. Its subcellular location is the cytoplasm. The protein localises to the chromosome. Functionally, regulatory subunit of the condensin complex, a complex required for conversion of interphase chromatin into mitotic-like condense chromosomes. The condensin complex probably introduces positive supercoils into relaxed DNA in the presence of type I topoisomerases and converts nicked DNA into positive knotted forms in the presence of type II topoisomerases. The condensin complex probably also plays a role during interphase. This is Condensin complex subunit 2 (BRN1) from Saccharomyces cerevisiae (strain ATCC 204508 / S288c) (Baker's yeast).